The chain runs to 236 residues: Uridylate kinase (236 aa).

An ATP-binding site is contributed by 10-13 (KLSG). A UMP-binding site is contributed by Gly52. ATP contacts are provided by Gly53 and Arg57. Residues Asp72 and 133-140 (TGNPFFTT) contribute to the UMP site. ATP is bound by residues Thr160, Tyr166, and Asp169.

It belongs to the UMP kinase family. As to quaternary structure, homohexamer.

It localises to the cytoplasm. The enzyme catalyses UMP + ATP = UDP + ADP. Its pathway is pyrimidine metabolism; CTP biosynthesis via de novo pathway; UDP from UMP (UMPK route): step 1/1. Inhibited by UTP. In terms of biological role, catalyzes the reversible phosphorylation of UMP to UDP. In Polaromonas sp. (strain JS666 / ATCC BAA-500), this protein is Uridylate kinase.